Consider the following 155-residue polypeptide: Urease accessory protein UreE (155 aa).

This sequence belongs to the UreE family.

Its subcellular location is the cytoplasm. In terms of biological role, involved in urease metallocenter assembly. Binds nickel. Probably functions as a nickel donor during metallocenter assembly. The polypeptide is Urease accessory protein UreE (Deinococcus radiodurans (strain ATCC 13939 / DSM 20539 / JCM 16871 / CCUG 27074 / LMG 4051 / NBRC 15346 / NCIMB 9279 / VKM B-1422 / R1)).